Reading from the N-terminus, the 316-residue chain is L-lactate dehydrogenase (316 aa).

NAD(+) contacts are provided by residues V15, D37, K42, Y68, and 82-83; that span reads GL. Residues Q85, R91, and 123-126 contribute to the substrate site; that span reads NPVD. NAD(+) is bound by residues 121-123 and T146; that span reads ASN. 151–154 contributes to the substrate binding site; it reads DTSR. The beta-D-fructose 1,6-bisphosphate site is built by R156 and H171. H178 acts as the Proton acceptor in catalysis. Position 222 is a phosphotyrosine (Y222). T231 is a binding site for substrate.

The protein belongs to the LDH/MDH superfamily. LDH family. In terms of assembly, homotetramer.

The protein resides in the cytoplasm. It catalyses the reaction (S)-lactate + NAD(+) = pyruvate + NADH + H(+). It participates in fermentation; pyruvate fermentation to lactate; (S)-lactate from pyruvate: step 1/1. With respect to regulation, allosterically activated by fructose 1,6-bisphosphate (FBP). Catalyzes the conversion of lactate to pyruvate. The protein is L-lactate dehydrogenase of Borreliella afzelii (strain PKo) (Borrelia afzelii).